The following is a 188-amino-acid chain: Adenylate kinase (188 aa).

12-17 contributes to the ATP binding site; that stretch reads GVGKGT. An NMP region spans residues 32–61; the sequence is STGDIFRSAMANHTELGDKAKSFMDAGNLV. Residues T33, R38, 59-61, 89-92, and Q96 each bind AMP; these read NLV and GYPR. The interval 130–136 is LID; the sequence is GRGREDD. Position 131 (R131) interacts with ATP. AMP-binding residues include R133 and R144. G172 provides a ligand contact to ATP.

Belongs to the adenylate kinase family. In terms of assembly, monomer.

Its subcellular location is the cytoplasm. It carries out the reaction AMP + ATP = 2 ADP. It participates in purine metabolism; AMP biosynthesis via salvage pathway; AMP from ADP: step 1/1. Its function is as follows. Catalyzes the reversible transfer of the terminal phosphate group between ATP and AMP. Plays an important role in cellular energy homeostasis and in adenine nucleotide metabolism. The polypeptide is Adenylate kinase (Oenococcus oeni (strain ATCC BAA-331 / PSU-1)).